The sequence spans 159 residues: Major allergen Pyr c 1 (159 aa).

The protein belongs to the BetVI family.

The sequence is that of Major allergen Pyr c 1 (PYRC1) from Pyrus communis (Pear).